An 85-amino-acid chain; its full sequence is Sec-independent protein translocase protein TatA (85 aa).

Residues 7 to 27 (VFGSLGWTEILLILFIALLLF) form a helical membrane-spanning segment. Positions 50–85 (LTGESDDSSQQISQEQERSVPKEETKTSKSKKSKSA) are disordered. Positions 64–76 (EQERSVPKEETKT) are enriched in basic and acidic residues.

It belongs to the TatA/E family. As to quaternary structure, forms a complex with TatC.

It is found in the cell inner membrane. Its function is as follows. Part of the twin-arginine translocation (Tat) system that transports large folded proteins containing a characteristic twin-arginine motif in their signal peptide across membranes. TatA could form the protein-conducting channel of the Tat system. This Leptospira interrogans serogroup Icterohaemorrhagiae serovar Lai (strain 56601) protein is Sec-independent protein translocase protein TatA.